The chain runs to 126 residues: Large ribosomal subunit protein bL12 (126 aa).

This sequence belongs to the bacterial ribosomal protein bL12 family. As to quaternary structure, homodimer. Part of the ribosomal stalk of the 50S ribosomal subunit. Forms a multimeric L10(L12)X complex, where L10 forms an elongated spine to which 2 to 4 L12 dimers bind in a sequential fashion. Binds GTP-bound translation factors.

In terms of biological role, forms part of the ribosomal stalk which helps the ribosome interact with GTP-bound translation factors. Is thus essential for accurate translation. This is Large ribosomal subunit protein bL12 from Streptococcus pyogenes serotype M28 (strain MGAS6180).